Consider the following 244-residue polypeptide: Probable phosphatase CA_C0509 (244 aa).

Zn(2+) is bound by residues His-8, His-10, His-16, His-41, Glu-74, His-102, His-132, Asp-193, and His-195.

This sequence belongs to the PHP family. Zn(2+) is required as a cofactor.

The sequence is that of Probable phosphatase CA_C0509 from Clostridium acetobutylicum (strain ATCC 824 / DSM 792 / JCM 1419 / IAM 19013 / LMG 5710 / NBRC 13948 / NRRL B-527 / VKM B-1787 / 2291 / W).